The sequence spans 273 residues: Thymidylate synthase (273 aa).

Residue R31 participates in dUMP binding. Residue H61 participates in (6R)-5,10-methylene-5,6,7,8-tetrahydrofolate binding. Residue 136-137 (RR) coordinates dUMP. C156 functions as the Nucleophile in the catalytic mechanism. Residues 176 to 179 (RSAD), N187, and 217 to 219 (HIY) contribute to the dUMP site. Residue D179 coordinates (6R)-5,10-methylene-5,6,7,8-tetrahydrofolate. A272 is a (6R)-5,10-methylene-5,6,7,8-tetrahydrofolate binding site.

Belongs to the thymidylate synthase family. Bacterial-type ThyA subfamily. As to quaternary structure, homodimer.

The protein resides in the cytoplasm. It carries out the reaction dUMP + (6R)-5,10-methylene-5,6,7,8-tetrahydrofolate = 7,8-dihydrofolate + dTMP. The protein operates within pyrimidine metabolism; dTTP biosynthesis. In terms of biological role, catalyzes the reductive methylation of 2'-deoxyuridine-5'-monophosphate (dUMP) to 2'-deoxythymidine-5'-monophosphate (dTMP) while utilizing 5,10-methylenetetrahydrofolate (mTHF) as the methyl donor and reductant in the reaction, yielding dihydrofolate (DHF) as a by-product. This enzymatic reaction provides an intracellular de novo source of dTMP, an essential precursor for DNA biosynthesis. The protein is Thymidylate synthase of Corynebacterium jeikeium (strain K411).